The primary structure comprises 479 residues: Aspartyl/glutamyl-tRNA(Asn/Gln) amidotransferase subunit B (479 aa).

It belongs to the GatB/GatE family. GatB subfamily. In terms of assembly, heterotrimer of A, B and C subunits.

The catalysed reaction is L-glutamyl-tRNA(Gln) + L-glutamine + ATP + H2O = L-glutaminyl-tRNA(Gln) + L-glutamate + ADP + phosphate + H(+). It catalyses the reaction L-aspartyl-tRNA(Asn) + L-glutamine + ATP + H2O = L-asparaginyl-tRNA(Asn) + L-glutamate + ADP + phosphate + 2 H(+). In terms of biological role, allows the formation of correctly charged Asn-tRNA(Asn) or Gln-tRNA(Gln) through the transamidation of misacylated Asp-tRNA(Asn) or Glu-tRNA(Gln) in organisms which lack either or both of asparaginyl-tRNA or glutaminyl-tRNA synthetases. The reaction takes place in the presence of glutamine and ATP through an activated phospho-Asp-tRNA(Asn) or phospho-Glu-tRNA(Gln). The sequence is that of Aspartyl/glutamyl-tRNA(Asn/Gln) amidotransferase subunit B from Mycoplasma capricolum subsp. capricolum (strain California kid / ATCC 27343 / NCTC 10154).